Reading from the N-terminus, the 404-residue chain is L-cysteine:1D-myo-inositol 2-amino-2-deoxy-alpha-D-glucopyranoside ligase 1 (404 aa).

A Zn(2+)-binding site is contributed by C47. Residues 47 to 50 (CGIT), T62, and 85 to 87 (NIT) each bind L-cysteinyl-5'-AMP. Residues 49–59 (ITPYDSTHLGH) carry the 'HIGH' region motif. Residues 188–193 (ERGGDP) carry the 'ERGGDP' region motif. W228 serves as a coordination point for L-cysteinyl-5'-AMP. Residue C232 participates in Zn(2+) binding. 250–252 (GSD) is an L-cysteinyl-5'-AMP binding site. A Zn(2+)-binding site is contributed by H257. I284 serves as a coordination point for L-cysteinyl-5'-AMP. The short motif at 290–294 (KMSKS) is the 'KMSKS' region element.

Belongs to the class-I aminoacyl-tRNA synthetase family. MshC subfamily. In terms of assembly, monomer. Zn(2+) serves as cofactor.

The enzyme catalyses 1D-myo-inositol 2-amino-2-deoxy-alpha-D-glucopyranoside + L-cysteine + ATP = 1D-myo-inositol 2-(L-cysteinylamino)-2-deoxy-alpha-D-glucopyranoside + AMP + diphosphate + H(+). In terms of biological role, catalyzes the ATP-dependent condensation of GlcN-Ins and L-cysteine to form L-Cys-GlcN-Ins. The sequence is that of L-cysteine:1D-myo-inositol 2-amino-2-deoxy-alpha-D-glucopyranoside ligase 1 from Corynebacterium jeikeium (strain K411).